The following is a 122-amino-acid chain: Large ribosomal subunit protein uL14 (122 aa).

Belongs to the universal ribosomal protein uL14 family. As to quaternary structure, part of the 50S ribosomal subunit. Forms a cluster with proteins L3 and L19. In the 70S ribosome, L14 and L19 interact and together make contacts with the 16S rRNA in bridges B5 and B8.

Binds to 23S rRNA. Forms part of two intersubunit bridges in the 70S ribosome. The polypeptide is Large ribosomal subunit protein uL14 (Mycoplasmopsis pulmonis (strain UAB CTIP) (Mycoplasma pulmonis)).